A 338-amino-acid chain; its full sequence is L-lysine 2,3-aminomutase (338 aa).

The Radical SAM core domain occupies 107-330; it reads HKYRNRLLFM…PKLAREIAGE (224 aa). Residues C121, C125, and C128 each contribute to the [4Fe-4S] cluster site. The residue at position 333 (K333) is an N6-(pyridoxal phosphate)lysine.

It belongs to the radical SAM superfamily. KamA family. Requires [4Fe-4S] cluster as cofactor. Pyridoxal 5'-phosphate is required as a cofactor.

The catalysed reaction is L-lysine = D-beta-lysine. Its function is as follows. With EpmA is involved in the beta-lysylation step of the post-translational modification of translation elongation factor P (EF-P) on 'Lys-34'. EpmB appears to act before EpmA. Displays lysine 2,3-aminomutase activity, producing (R)-beta-lysine from (S)-alpha-lysine (L-lysine). This is L-lysine 2,3-aminomutase (epmB) from Haemophilus influenzae (strain ATCC 51907 / DSM 11121 / KW20 / Rd).